The primary structure comprises 473 residues: Cannabinoid receptor 1 (473 aa).

Residues 1 to 121 (MKSILDGLAD…LNPSQQLAIA (121 aa)) are Extracellular-facing. The interval 2 to 23 (KSILDGLADTTFRTITTDLLYV) is required for mitochondrial localization. Residues N78 and N84 are each glycosylated (N-linked (GlcNAc...) asparagine). Residues 122–142 (VLSLTLGTFTVLENLLVLCVI) traverse the membrane as a helical segment. The Cytoplasmic portion of the chain corresponds to 143 to 155 (LHSRSLRCRPSYH). Residues 156–176 (FIGSLAVADLLGSVIFVYSFV) traverse the membrane as a helical segment. The Extracellular segment spans residues 177–188 (DFHVFHRKDSPN). Residues 189–209 (VFLFKLGGVTASFTASVGSLF) traverse the membrane as a helical segment. The Cytoplasmic segment spans residues 210-233 (LTAIDRYISIHRPLAYKRIVTRPK). Residues 234–254 (AVVAFCLMWTIAIVIAVLPLL) traverse the membrane as a helical segment. Residues 255–278 (GWNCKKLQSVCSDIFPLIDETYLM) are Extracellular-facing. A helical membrane pass occupies residues 279–299 (FWIGVTSVLLLFIVYAYMYIL). At 300-345 (WKAHSHAVRMIQRGTQKSIIIHTSEDGKVQVTRPDQARMDIRLAKT) the chain is on the cytoplasmic side. The helical transmembrane segment at 346-366 (LVLILVVLIICWGPLLAIMVY) threads the bilayer. Over 367-378 (DVFGKMNKLIKT) the chain is Extracellular. Residues 379 to 399 (VFAFCSMLCLLNSTVNPIIYA) traverse the membrane as a helical segment. The Cytoplasmic portion of the chain corresponds to 400-473 (LRSKDLRHAF…VSTDTSAEAL (74 aa)). Residue C416 is the site of S-palmitoyl cysteine attachment. 2 positions are modified to phosphoserine: S426 and S430.

It belongs to the G-protein coupled receptor 1 family. Interacts (via C-terminus) with CNRIP1. Associates with G protein alpha subunits, including G(i) alpha-1/GNAI1, G(i) alpha-3/GNAI3 and G(o)-alpha/GNAO1; palmitoylation is important for interaction with GNAI3 and GNAO1. Palmitoylation at Cys-416 is important for recruitment at both plasma membrane and lipid rafts and association with G protein alpha subunits. In terms of tissue distribution, expressed in brain neurons (at protein level). Detected throughout the striatum, cortex and hippocampus, with highest levels in the lateral striatum. In rostral brain regions, high expression levels in the dorsal lateral striatum, while in the caudal brain regions, high levels are observed in the ventral lateral striatum. Expressed in neurons. In the hypothalamus, expressed in both GABAergic and glutamatergic presynaptic terminals of POMC neurons (at protein level). Expressed in striated muscles, including skeletal muscles (gastrocnemius and rectus abdominis) and myocardium (at protein level). Expressed in the liver, with highest levels in Kupffer cells and lower levels in endothelial cells as well as hepatocytes, particularly in perivascular areas (at protein level). The hepatic expression level is up-regulated in obese mice compared to lean animals.

The protein resides in the cell membrane. It is found in the mitochondrion outer membrane. Its subcellular location is the cell projection. It localises to the axon. The protein localises to the presynapse. Hemopressin, a peptide derived from hemoglobin subunit alpha (HBA1 and/or HBA2), acts as an antagonist peptide: hemopressin-binding efficiently blocks cannabinoid receptor CNR1 and subsequent signaling. In terms of biological role, G-protein coupled receptor for cannabinoids, including endocannabinoids (eCBs), such as N-arachidonoylethanolamide (also called anandamide or AEA) and 2-arachidonoylglycerol (2-AG). Mediates many cannabinoid-induced effects, acting, among others, on food intake, memory loss, gastrointestinal motility, catalepsy, ambulatory activity, anxiety, chronic pain. Signaling typically involves reduction in cyclic AMP. In the hypothalamus, may have a dual effect on mitochondrial respiration depending upon the agonist dose and possibly upon the cell type. Increases respiration at low doses, while decreases respiration at high doses. At high doses, CNR1 signal transduction involves G-protein alpha-i protein activation and subsequent inhibition of mitochondrial soluble adenylate cyclase, decrease in cyclic AMP concentration, inhibition of protein kinase A (PKA)-dependent phosphorylation of specific subunits of the mitochondrial electron transport system, including NDUFS2. In the hypothalamus, inhibits leptin-induced reactive oxygen species (ROS) formation and mediates cannabinoid-induced increase in SREBF1 and FASN gene expression. In response to cannabinoids, drives the release of orexigenic beta-endorphin, but not that of melanocyte-stimulating hormone alpha/alpha-MSH, from hypothalamic POMC neurons, hence promoting food intake. In the hippocampus, regulates cellular respiration and energy production in response to cannabinoids. Involved in cannabinoid-dependent depolarization-induced suppression of inhibition (DSI), a process in which depolarization of CA1 postsynaptic pyramidal neurons mobilizes eCBs, which retrogradely activate presynaptic CB1 receptors, transiently decreasing GABAergic inhibitory neurotransmission. Also reduces excitatory synaptic transmission. In superior cervical ganglions and cerebral vascular smooth muscle cells, inhibits voltage-gated Ca(2+) channels in a constitutive, as well as agonist-dependent manner. In cerebral vascular smooth muscle cells, cannabinoid-induced inhibition of voltage-gated Ca(2+) channels leads to vasodilation and decreased vascular tone. Induces leptin production in adipocytes and reduces LRP2-mediated leptin clearance in the kidney, hence participating in hyperleptinemia. In adipose tissue, CNR1 signaling leads to increased expression of SREBF1, ACACA and FASN genes. In the liver, activation by endocannabinoids leads to increased de novo lipogenesis and reduced fatty acid catabolism, associated with increased expression of SREBF1/SREBP-1, GCK, ACACA, ACACB and FASN genes. May also affect de novo cholesterol synthesis and HDL-cholesteryl ether uptake. Peripherally modulates energy metabolism. In high carbohydrate diet-induced obesity, may decrease the expression of mitochondrial dihydrolipoyl dehydrogenase/DLD in striated muscles, as well as that of selected glucose/ pyruvate metabolic enzymes, hence affecting energy expenditure through mitochondrial metabolism. In response to cannabinoid anandamide, elicits a pro-inflammatory response in macrophages, which involves NLRP3 inflammasome activation and IL1B and IL18 secretion. In macrophages infiltrating pancreatic islets, this process may participate in the progression of type-2 diabetes and associated loss of pancreatic beta-cells. The protein is Cannabinoid receptor 1 (Cnr1) of Mus musculus (Mouse).